The chain runs to 493 residues: Sorting nexin-4 (493 aa).

Positions 1 to 67 (MDQDGFHSIA…KAGEAGDVGV (67 aa)) are disordered. Residues 37 to 48 (SISPSSAQPPAS) show a composition bias toward low complexity. The PX domain occupies 89 to 211 (WMDVQVREPA…DFLQSTEWSV (123 aa)). A 1,2-diacyl-sn-glycero-3-phospho-(1D-myo-inositol-3-phosphate)-binding residues include Arg132, Lys158, and Arg177.

Belongs to the sorting nexin family.

The protein localises to the cytoplasm. The protein resides in the cytosol. Its subcellular location is the preautophagosomal structure membrane. It localises to the endosome membrane. Sorting nexin, involved in the separation or division of vacuoles throughout the entire life cycle of the cells. Involved in retrieval of late-Golgi SNAREs from post-Golgi endosomes to the trans-Golgi network, for cytoplasm to vacuole transport (Cvt), and autophagy of large cargos including mitophagy, pexophagy and glycophagy. The polypeptide is Sorting nexin-4 (SNX4) (Cryptococcus neoformans var. neoformans serotype D (strain B-3501A) (Filobasidiella neoformans)).